Here is a 309-residue protein sequence, read N- to C-terminus: Acetylglutamate kinase (309 aa).

Residues glycine 82–glycine 83, arginine 104, and asparagine 206 contribute to the substrate site.

It belongs to the acetylglutamate kinase family. ArgB subfamily.

The protein localises to the cytoplasm. The enzyme catalyses N-acetyl-L-glutamate + ATP = N-acetyl-L-glutamyl 5-phosphate + ADP. Its pathway is amino-acid biosynthesis; L-arginine biosynthesis; N(2)-acetyl-L-ornithine from L-glutamate: step 2/4. Functionally, catalyzes the ATP-dependent phosphorylation of N-acetyl-L-glutamate. The sequence is that of Acetylglutamate kinase from Cupriavidus metallidurans (strain ATCC 43123 / DSM 2839 / NBRC 102507 / CH34) (Ralstonia metallidurans).